The primary structure comprises 331 residues: Lipoyl synthase (331 aa).

[4Fe-4S] cluster contacts are provided by C60, C65, C71, C86, C90, C93, and S301. A Radical SAM core domain is found at 72–290 (WSRGTATFML…REEGMQLGFL (219 aa)).

Belongs to the radical SAM superfamily. Lipoyl synthase family. It depends on [4Fe-4S] cluster as a cofactor.

It is found in the cytoplasm. It carries out the reaction [[Fe-S] cluster scaffold protein carrying a second [4Fe-4S](2+) cluster] + N(6)-octanoyl-L-lysyl-[protein] + 2 oxidized [2Fe-2S]-[ferredoxin] + 2 S-adenosyl-L-methionine + 4 H(+) = [[Fe-S] cluster scaffold protein] + N(6)-[(R)-dihydrolipoyl]-L-lysyl-[protein] + 4 Fe(3+) + 2 hydrogen sulfide + 2 5'-deoxyadenosine + 2 L-methionine + 2 reduced [2Fe-2S]-[ferredoxin]. The protein operates within protein modification; protein lipoylation via endogenous pathway; protein N(6)-(lipoyl)lysine from octanoyl-[acyl-carrier-protein]: step 2/2. Its function is as follows. Catalyzes the radical-mediated insertion of two sulfur atoms into the C-6 and C-8 positions of the octanoyl moiety bound to the lipoyl domains of lipoate-dependent enzymes, thereby converting the octanoylated domains into lipoylated derivatives. The protein is Lipoyl synthase of Deinococcus radiodurans (strain ATCC 13939 / DSM 20539 / JCM 16871 / CCUG 27074 / LMG 4051 / NBRC 15346 / NCIMB 9279 / VKM B-1422 / R1).